The sequence spans 90 residues: Small ribosomal subunit protein uS15 (90 aa).

The protein belongs to the universal ribosomal protein uS15 family. In terms of assembly, part of the 30S ribosomal subunit. Forms a bridge to the 50S subunit in the 70S ribosome, contacting the 23S rRNA.

One of the primary rRNA binding proteins, it binds directly to 16S rRNA where it helps nucleate assembly of the platform of the 30S subunit by binding and bridging several RNA helices of the 16S rRNA. In terms of biological role, forms an intersubunit bridge (bridge B4) with the 23S rRNA of the 50S subunit in the ribosome. This Campylobacter lari (strain RM2100 / D67 / ATCC BAA-1060) protein is Small ribosomal subunit protein uS15.